The following is a 491-amino-acid chain: NADH-quinone oxidoreductase subunit N 1 (491 aa).

14 helical membrane-spanning segments follow: residues 9–29 (IAAPLLALAAGALLILLLDLL), 38–58 (PMYVAAVGAVLVAGWYLVPLW), 76–96 (FAAVYGLVLLGAALLAILLSF), 104–124 (SGYLALLLWAAMGMVLLGGAG), 126–146 (LMVIFLGIELLSLALYVMIAF), 161–181 (FVLGSVAAAFLIFGFALIYGA), 211–231 (VGVGLAIVGLAFKMALVPFHI), 246–266 (AFMAIGTKAAAFAAMARLLVA), 276–296 (FLLPLSILAFASMMLGATVGI), 304–324 (LMAYSGIANAGYLIMAIPGLG), 329–349 (SAAAYYLAAYGFATMGVFAVV), 375–395 (VGVCLAVLFFGLIGVPPTGGF), 410–432 (AWIVLTGLILSTGISAYVYLKVI), and 461–481 (VVLAIATAGTLVLGVLPGPVS).

It belongs to the complex I subunit 2 family. As to quaternary structure, NDH-1 is composed of 14 different subunits. Subunits NuoA, H, J, K, L, M, N constitute the membrane sector of the complex.

Its subcellular location is the cell membrane. The catalysed reaction is a quinone + NADH + 5 H(+)(in) = a quinol + NAD(+) + 4 H(+)(out). Its function is as follows. NDH-1 shuttles electrons from NADH, via FMN and iron-sulfur (Fe-S) centers, to quinones in the respiratory chain. The immediate electron acceptor for the enzyme in this species is believed to be a menaquinone. Couples the redox reaction to proton translocation (for every two electrons transferred, four hydrogen ions are translocated across the cytoplasmic membrane), and thus conserves the redox energy in a proton gradient. This is NADH-quinone oxidoreductase subunit N 1 from Symbiobacterium thermophilum (strain DSM 24528 / JCM 14929 / IAM 14863 / T).